The primary structure comprises 151 residues: MTIWVDADACPNVIKEILYRAAERMQLPLILVANQALRVPPSRFIRTLRVAAGFDVADNEIVRQCEAGDLVITADIPLAAEVLEKGAAALNPRGERYSDATIRERLTMRDFMDTLRASGVQTGGPNTLSPRDRQHFAAELDKWWLESQRKK.

It belongs to the UPF0178 family.

This chain is UPF0178 protein YaiI, found in Salmonella agona (strain SL483).